The primary structure comprises 263 residues: Protein maestro (263 aa).

Positions 1 to 21 are disordered; sequence MDQTPRRMLGQPLSSPATQPK. An HEAT repeat occupies 128–163; the sequence is SFFIDITLQTRTLLDDENDSLRYSAFVLFGQLADLA.

The protein localises to the nucleus. It localises to the nucleolus. This Bos taurus (Bovine) protein is Protein maestro (MRO).